We begin with the raw amino-acid sequence, 466 residues long: ATP synthase subunit beta (466 aa).

155–162 (GGAGVGKT) provides a ligand contact to ATP.

Belongs to the ATPase alpha/beta chains family. In terms of assembly, F-type ATPases have 2 components, CF(1) - the catalytic core - and CF(0) - the membrane proton channel. CF(1) has five subunits: alpha(3), beta(3), gamma(1), delta(1), epsilon(1). CF(0) has three main subunits: a(1), b(2) and c(9-12). The alpha and beta chains form an alternating ring which encloses part of the gamma chain. CF(1) is attached to CF(0) by a central stalk formed by the gamma and epsilon chains, while a peripheral stalk is formed by the delta and b chains.

It is found in the cell inner membrane. It catalyses the reaction ATP + H2O + 4 H(+)(in) = ADP + phosphate + 5 H(+)(out). Produces ATP from ADP in the presence of a proton gradient across the membrane. The catalytic sites are hosted primarily by the beta subunits. In Bordetella petrii (strain ATCC BAA-461 / DSM 12804 / CCUG 43448), this protein is ATP synthase subunit beta.